The primary structure comprises 499 residues: Serine/threonine-protein phosphatase 5 (499 aa).

A disordered region spans residues 1-23 (MAMAEGERTECAEPPRDEPPAEG). A2 is modified (N-acetylalanine). TPR repeat units lie at residues 28–61 (AEELKTQANDYFKAKDYENAIKFYSQAIELNPSN), 62–95 (AIYYGNRSLAYLRTECYGYALGDATRAIELDKKY), and 96–129 (IKGYYRRAASNMALGKFRAALRDYETVVKVKPND). Positions 200 to 499 (DQKKLHRKCA…ANTLLQLGMM (300 aa)) are catalytic. Positions 242, 244, and 271 each coordinate Mg(2+). H244 contacts substrate. Residues R275 and 303–304 (NH) each bind substrate. Position 303 (N303) interacts with Mg(2+). H304 (proton donor/acceptor) is an active-site residue. H352 lines the Mg(2+) pocket. 2 residues coordinate substrate: R400 and H427. Position 427 (H427) interacts with Mg(2+). The tract at residues 495–499 (QLGMM) is required for autoinhibition.

Belongs to the PPP phosphatase family. PP-5 (PP-T) subfamily. In terms of assembly, probably forms a complex composed of chaperones HSP90 and HSP70, co-chaperones STIP1/HOP, CDC37, PPP5C, PTGES3/p23, TSC1 and client protein TSC2. Probably forms a complex composed of chaperones HSP90 and HSP70, co-chaperones CDC37, PPP5C, TSC1 and client protein TSC2, CDK4, AKT, RAF1 and NR3C1; this complex does not contain co-chaperones STIP1/HOP and PTGES3/p23. Part of a complex with HSP90/HSP90AA1 and steroid receptors. Interacts (via TPR repeats) with HSP90AA1 (via TPR repeat-binding motif) or HSPA1A/HSPA1B; the interaction is direct and activates the phosphatase activity. Dissociates from HSPA1A/HSPA1B and HSP90AA1 in response to arachidonic acid. Interacts with CPNE1 (via VWFA domain). Interacts with CDC16, CDC27. Interacts with KLHDC10 (via the 6 Kelch repeats); inhibits the phosphatase activity on MAP3K5. Interacts with ATM and ATR; both interactions are induced by DNA damage and enhance ATM and ATR kinase activity. Interacts with RAD17; reduced by DNA damage. Interacts with nuclear receptors such as NR3C1/GCR and PPARG (activated by agonist); regulates their transactivation activities. Interacts (via TPR repeats) with S100 proteins S100A1, S100A2, S100A6, S100B and S100P; the interactions are calcium-dependent, strongly activate PPP5C phosphatase activity and compete with HSP90AA1 and MAP3K5 interactions. Interacts with SMAD2 and SMAD3 but not with SMAD1; decreases SMAD3 phosphorylation and protein levels. Interacts (via TPR repeats) with CRY1 and CRY2; the interaction with CRY2 down-regulates the phosphatase activity on CSNK1E. Interacts (via TPR repeats) with the active form of RAC1, GNA12 or GNA13; these interactions activate the phosphatase activity and translocate PPP5C to the cell membrane. Interacts with FLCN. It depends on Mg(2+) as a cofactor. Mn(2+) is required as a cofactor. In terms of processing, activated by at least two different proteolytic cleavages producing a 56 kDa and a 50 kDa form. In terms of tissue distribution, predominantly found in brain and, in lower levels, in testis, but was nearly undetectable in spleen, lung, skeletal muscle, kidney and liver.

The protein resides in the nucleus. Its subcellular location is the cytoplasm. The protein localises to the cell membrane. It catalyses the reaction O-phospho-L-seryl-[protein] + H2O = L-seryl-[protein] + phosphate. It carries out the reaction O-phospho-L-threonyl-[protein] + H2O = L-threonyl-[protein] + phosphate. Autoinhibited. In the autoinhibited state, the TPR domain interacts with the catalytic region and prevents substrate access to the catalytic pocket. Allosterically activated by various polyunsaturated fatty acids, free long-chain fatty-acids and long-chain fatty acyl-CoA esters, arachidonic acid being the most effective activator. HSP90A and probably RAC1, GNA12 and GNA13 can also release the autoinhibition by the TPR repeat. Activation by RAC1, GNA12 and GNA13 is synergistic with the one produced by fatty acids binding. Inhibited by okadaic acid. In terms of biological role, serine/threonine-protein phosphatase that dephosphorylates a myriad of proteins involved in different signaling pathways including the kinases CSNK1E, ASK1/MAP3K5, PRKDC and RAF1, the nuclear receptors NR3C1, PPARG, ESR1 and ESR2, SMAD proteins and TAU/MAPT. Implicated in wide ranging cellular processes, including apoptosis, differentiation, DNA damage response, cell survival, regulation of ion channels or circadian rhythms, in response to steroid and thyroid hormones, calcium, fatty acids, TGF-beta as well as oxidative and genotoxic stresses. Participates in the control of DNA damage response mechanisms such as checkpoint activation and DNA damage repair through, for instance, the regulation ATM/ATR-signaling and dephosphorylation of PRKDC and TP53BP1. Inhibits ASK1/MAP3K5-mediated apoptosis induced by oxidative stress. Plays a positive role in adipogenesis, mainly through the dephosphorylation and activation of PPARG transactivation function. Also dephosphorylates and inhibits the anti-adipogenic effect of NR3C1. Regulates the circadian rhythms, through the dephosphorylation and activation of CSNK1E. May modulate TGF-beta signaling pathway by the regulation of SMAD3 phosphorylation and protein expression levels. Dephosphorylates and may play a role in the regulation of TAU/MAPT. Through their dephosphorylation, may play a role in the regulation of ions channels such as KCNH2. Dephosphorylate FNIP1, disrupting interaction with HSP90AA1/Hsp90. The chain is Serine/threonine-protein phosphatase 5 (Ppp5c) from Rattus norvegicus (Rat).